The sequence spans 256 residues: UPF0246 protein Swoo_1284 (256 aa).

This sequence belongs to the UPF0246 family.

The sequence is that of UPF0246 protein Swoo_1284 from Shewanella woodyi (strain ATCC 51908 / MS32).